Reading from the N-terminus, the 510-residue chain is ATP synthase subunit alpha (510 aa).

169 to 176 contributes to the ATP binding site; the sequence is GDRQTGKT.

The protein belongs to the ATPase alpha/beta chains family. As to quaternary structure, F-type ATPases have 2 components, CF(1) - the catalytic core - and CF(0) - the membrane proton channel. CF(1) has five subunits: alpha(3), beta(3), gamma(1), delta(1), epsilon(1). CF(0) has three main subunits: a(1), b(2) and c(9-12). The alpha and beta chains form an alternating ring which encloses part of the gamma chain. CF(1) is attached to CF(0) by a central stalk formed by the gamma and epsilon chains, while a peripheral stalk is formed by the delta and b chains.

It is found in the cell inner membrane. It carries out the reaction ATP + H2O + 4 H(+)(in) = ADP + phosphate + 5 H(+)(out). Its function is as follows. Produces ATP from ADP in the presence of a proton gradient across the membrane. The alpha chain is a regulatory subunit. This is ATP synthase subunit alpha from Anaeromyxobacter dehalogenans (strain 2CP-C).